The primary structure comprises 80 residues: U-poneritoxin(01)-Om3a (80 aa).

A signal peptide spans 1 to 25 (MKPSGLALAFLVVFMMAIMYNSVQA). A propeptide spanning residues 26–39 (AAIADADAEAEAIA) is cleaved from the precursor.

It belongs to the formicidae venom precursor-01 superfamily. In terms of processing, truncated sequences of this peptide have also been found in the venom. It is possible they have been cleaved in the venom. As to expression, expressed by the venom gland.

The protein localises to the secreted. Functionally, cationic amphipathic alpha-helical peptide with antimicrobial activities against E.coli (MIC=3.1 uM), S.aureus (MIC=25 uM), and S.cerevisiae (MIC=50 uM). Also shows histamine-releasing activity (37.5% at 10 uM). Does not show hemolytic activity, even at 50 uM. This chain is U-poneritoxin(01)-Om3a, found in Odontomachus monticola (Trap-jaw ant).